A 259-amino-acid chain; its full sequence is UPF0246 protein SG0407 (259 aa).

It belongs to the UPF0246 family.

This chain is UPF0246 protein SG0407, found in Sodalis glossinidius (strain morsitans).